The sequence spans 348 residues: Holliday junction branch migration complex subunit RuvB (348 aa).

Residues 1 to 10 show a composition bias toward polar residues; it reads MAIVSSNAGS. The tract at residues 1–41 is disordered; sequence MAIVSSNAGSSAPRREPVLDAQPLPEESSGRPDDGLRPKRL. The interval 13-197 is large ATPase domain (RuvB-L); that stretch reads PRREPVLDAQ…FGLIQRLEFY (185 aa). The span at 28–41 shows a compositional bias: basic and acidic residues; it reads SSGRPDDGLRPKRL. The ATP site is built by leucine 36, arginine 37, glycine 78, lysine 81, threonine 82, threonine 83, arginine 187, tyrosine 197, and arginine 234. Threonine 82 is a binding site for Mg(2+). Residues 198-269 are small ATPAse domain (RuvB-S); sequence GQEDLEAIVS…LVSQALSLHR (72 aa). The head domain (RuvB-H) stretch occupies residues 272–348; that stretch reads HRGLDAGDRR…RAHLREQEVA (77 aa). Positions 327 and 332 each coordinate DNA.

It belongs to the RuvB family. In terms of assembly, homohexamer. Forms an RuvA(8)-RuvB(12)-Holliday junction (HJ) complex. HJ DNA is sandwiched between 2 RuvA tetramers; dsDNA enters through RuvA and exits via RuvB. An RuvB hexamer assembles on each DNA strand where it exits the tetramer. Each RuvB hexamer is contacted by two RuvA subunits (via domain III) on 2 adjacent RuvB subunits; this complex drives branch migration. In the full resolvosome a probable DNA-RuvA(4)-RuvB(12)-RuvC(2) complex forms which resolves the HJ.

It localises to the cytoplasm. The catalysed reaction is ATP + H2O = ADP + phosphate + H(+). Its function is as follows. The RuvA-RuvB-RuvC complex processes Holliday junction (HJ) DNA during genetic recombination and DNA repair, while the RuvA-RuvB complex plays an important role in the rescue of blocked DNA replication forks via replication fork reversal (RFR). RuvA specifically binds to HJ cruciform DNA, conferring on it an open structure. The RuvB hexamer acts as an ATP-dependent pump, pulling dsDNA into and through the RuvAB complex. RuvB forms 2 homohexamers on either side of HJ DNA bound by 1 or 2 RuvA tetramers; 4 subunits per hexamer contact DNA at a time. Coordinated motions by a converter formed by DNA-disengaged RuvB subunits stimulates ATP hydrolysis and nucleotide exchange. Immobilization of the converter enables RuvB to convert the ATP-contained energy into a lever motion, pulling 2 nucleotides of DNA out of the RuvA tetramer per ATP hydrolyzed, thus driving DNA branch migration. The RuvB motors rotate together with the DNA substrate, which together with the progressing nucleotide cycle form the mechanistic basis for DNA recombination by continuous HJ branch migration. Branch migration allows RuvC to scan DNA until it finds its consensus sequence, where it cleaves and resolves cruciform DNA. The protein is Holliday junction branch migration complex subunit RuvB of Parasynechococcus marenigrum (strain WH8102).